The chain runs to 151 residues: UPF0719 transmembrane protein MAP_1032c (151 aa).

Helical transmembrane passes span 20–40 (VATI…FYAV), 60–80 (AVVV…TAIA), 90–110 (LVGV…ALLA), and 130–150 (PGSF…AAAV).

This sequence belongs to the UPF0719 family.

It is found in the cell membrane. This Mycolicibacterium paratuberculosis (strain ATCC BAA-968 / K-10) (Mycobacterium paratuberculosis) protein is UPF0719 transmembrane protein MAP_1032c.